A 343-amino-acid polypeptide reads, in one-letter code: Methionine import ATP-binding protein MetN (343 aa).

One can recognise an ABC transporter domain in the interval 2-241 (IKLSNITKVF…PKTPLAQKFI (240 aa)). 38 to 45 (GASGAGKS) contributes to the ATP binding site.

The protein belongs to the ABC transporter superfamily. Methionine importer (TC 3.A.1.24) family. As to quaternary structure, the complex is composed of two ATP-binding proteins (MetN), two transmembrane proteins (MetI) and a solute-binding protein (MetQ).

The protein localises to the cell inner membrane. It catalyses the reaction L-methionine(out) + ATP + H2O = L-methionine(in) + ADP + phosphate + H(+). It carries out the reaction D-methionine(out) + ATP + H2O = D-methionine(in) + ADP + phosphate + H(+). Part of the ABC transporter complex MetNIQ involved in methionine import. Responsible for energy coupling to the transport system. The protein is Methionine import ATP-binding protein MetN of Escherichia coli O157:H7.